Here is a 336-residue protein sequence, read N- to C-terminus: Cytoskeleton protein RodZ (336 aa).

Topologically, residues methionine 1–glycine 111 are cytoplasmic. In terms of domain architecture, HTH cro/C1-type spans leucine 19–leucine 71. The H-T-H motif DNA-binding region spans glutamine 30–glutamate 49. Residues tryptophan 112–tryptophan 132 traverse the membrane as a helical; Signal-anchor for type II membrane protein segment. The Periplasmic portion of the chain corresponds to tryptophan 133 to glutamine 336. A compositionally biased stretch (polar residues) spans aspartate 148–leucine 164. The segment at aspartate 148–threonine 245 is disordered. The span at aspartate 165–threonine 201 shows a compositional bias: low complexity. Positions valine 202 to valine 217 are enriched in polar residues. Residues aspartate 218 to aspartate 240 are compositionally biased toward low complexity.

This sequence belongs to the RodZ family.

The protein localises to the cell inner membrane. Functionally, cytoskeletal protein that is involved in cell-shape control through regulation of the length of the long axis. The protein is Cytoskeleton protein RodZ of Escherichia coli O7:K1 (strain IAI39 / ExPEC).